A 428-amino-acid chain; its full sequence is GTPase Obg (428 aa).

Residues Met1–Leu158 enclose the Obg domain. The 173-residue stretch at Ala159–Lys331 folds into the OBG-type G domain. Residues Gly165–Ser172, Phe190–Lys194, Asp212–Gly215, Asn282–Asp285, and Ser312–Ala314 each bind GTP. Positions 172 and 192 each coordinate Mg(2+). An OCT domain is found at Met345–Leu428.

Belongs to the TRAFAC class OBG-HflX-like GTPase superfamily. OBG GTPase family. In terms of assembly, monomer. The cofactor is Mg(2+).

The protein localises to the cytoplasm. An essential GTPase which binds GTP, GDP and possibly (p)ppGpp with moderate affinity, with high nucleotide exchange rates and a fairly low GTP hydrolysis rate. Plays a role in control of the cell cycle, stress response, ribosome biogenesis and in those bacteria that undergo differentiation, in morphogenesis control. This Clostridium botulinum (strain Alaska E43 / Type E3) protein is GTPase Obg.